The chain runs to 395 residues: Guanine nucleotide-binding protein subunit beta-5 (395 aa).

WD repeat units lie at residues Gly-103 to Ala-142, Met-145 to Met-184, Met-193 to His-234, His-236 to Glu-278, Thr-279 to Ile-318, Ser-320 to Ile-362, and Gly-365 to Trp-394.

The protein belongs to the WD repeat G protein beta family. In terms of assembly, component of a complex composed of RGS9 (isoform RGS9-1), GNB5 and RGS9BP; within this complex, the presence of GNB5 stabilizes both itself and RGS9 and increases RGS9 GTPase-activating protein (GAP) activity. Interacts with RGS7, forming the RGS7-GNB5 complex; within this complex, the presence of GNB5 increases RGS7 GTPase-activating protein (GAP) activity. Interacts with GPR158; promotes the GTPase activator activity of the RGS7-GNB5 complex in absence of glycine, in contrast GTPase activator activity of the RGS7-GNB5 complex is inhibited in presence of glycine. Interacts with RGS6. As to expression, widely expressed.

The protein localises to the membrane. Its function is as follows. Enhances GTPase-activating protein (GAP) activity of regulator of G protein signaling (RGS) proteins, such as RGS7 and RGS9, hence involved in the termination of the signaling initiated by the G protein coupled receptors (GPCRs) by accelerating the GTP hydrolysis on the G-alpha subunits, thereby promoting their inactivation. Increases RGS7 GTPase-activating protein (GAP) activity, thereby regulating mood and cognition. Increases RGS9 GTPase-activating protein (GAP) activity, hence contributes to the deactivation of G protein signaling initiated by D(2) dopamine receptors. May play an important role in neuronal signaling, including in the parasympathetic, but not sympathetic, control of heart rate. The chain is Guanine nucleotide-binding protein subunit beta-5 (GNB5) from Homo sapiens (Human).